Reading from the N-terminus, the 341-residue chain is Phenylalanine--tRNA ligase alpha subunit (341 aa).

Glu259 contacts Mg(2+).

This sequence belongs to the class-II aminoacyl-tRNA synthetase family. Phe-tRNA synthetase alpha subunit type 1 subfamily. Tetramer of two alpha and two beta subunits. Mg(2+) serves as cofactor.

It localises to the cytoplasm. The enzyme catalyses tRNA(Phe) + L-phenylalanine + ATP = L-phenylalanyl-tRNA(Phe) + AMP + diphosphate + H(+). The sequence is that of Phenylalanine--tRNA ligase alpha subunit from Mycobacterium tuberculosis (strain ATCC 25177 / H37Ra).